The following is a 428-amino-acid chain: Histidine--tRNA ligase (428 aa).

Belongs to the class-II aminoacyl-tRNA synthetase family. Homodimer.

The protein resides in the cytoplasm. The enzyme catalyses tRNA(His) + L-histidine + ATP = L-histidyl-tRNA(His) + AMP + diphosphate + H(+). The protein is Histidine--tRNA ligase of Ectopseudomonas mendocina (strain ymp) (Pseudomonas mendocina).